The sequence spans 316 residues: tRNA dimethylallyltransferase (316 aa).

13–20 (GPTAVGKT) contacts ATP. 15–20 (TAVGKT) contacts substrate. The tract at residues 38–41 (DSIQ) is interaction with substrate tRNA.

It belongs to the IPP transferase family. Monomer. Requires Mg(2+) as cofactor.

It carries out the reaction adenosine(37) in tRNA + dimethylallyl diphosphate = N(6)-dimethylallyladenosine(37) in tRNA + diphosphate. Catalyzes the transfer of a dimethylallyl group onto the adenine at position 37 in tRNAs that read codons beginning with uridine, leading to the formation of N6-(dimethylallyl)adenosine (i(6)A). This chain is tRNA dimethylallyltransferase, found in Staphylococcus carnosus (strain TM300).